Here is a 67-residue protein sequence, read N- to C-terminus: Ubiquinol-cytochrome c reductase complex assembly factor 6 (67 aa).

The Mitochondrial matrix segment spans residues 1 to 8 (MPGGVPWS). Residues 9–25 (AYLKMLSSSLLAMCAGA) form a helical; Signal-anchor for type II membrane protein membrane-spanning segment. Residues 26-67 (QVVHWYYRPDLTIPEIPPKPGELKTELLGLKERRHEPHVSQQ) lie on the Mitochondrial intermembrane side of the membrane.

This sequence belongs to the UQCC6 family. Interacts with UQCRC1. Interacts with UQCRQ. Interacts with UQCC5. Forms a complex, named COMB/coordinator of mitochondrial CYTB biogenesis, composed of UQCC1, UQCC2, UQCC4, UQCC5 and UQCC6; stabilizes nascent cytochrome b/MT-CYB and promotes its membrane insertion. Forms a complex, named COMA, composed of UQCC1, UQCC2 and UQCC4; activates MT-CYB translation. Forms a complex, named COMC, composed of UQCC1, UQCC2; UQCC3 and UQCC4; mediates MT-CYB hemylation and association with the first nuclear-encoded complex III subunit UQCRQ. Interacts with MT-CYB. Highly expressed in brown adipose, cardiac and skeletal muscle (at protein level).

The protein localises to the mitochondrion inner membrane. Required for the assembly and stability of the mitochondrial ubiquinol-cytochrome c reductase complex (complex III or cytochrome b-c1 complex), a multisubunit transmembrane complex that is part of the mitochondrial electron transport chain (ETC) which drives oxidative phosphorylation. Mediates early complex III biogenesis. Participates in regulating the levels of electron transport chain proteins, and therefore energy supply, in response to changes in energy demand. Also required for cytochrome c oxidase complex (complex IV) assembly. This chain is Ubiquinol-cytochrome c reductase complex assembly factor 6, found in Mus musculus (Mouse).